The following is a 472-amino-acid chain: Cysteine--tRNA ligase (472 aa).

Cys-29 provides a ligand contact to Zn(2+). The short motif at 31–41 is the 'HIGH' region element; it reads ITVYDYCHLGH. The Zn(2+) site is built by Cys-214, His-239, and Glu-243. The short motif at 271-275 is the 'KMSKS' region element; sequence KMSKS. Lys-274 contacts ATP.

This sequence belongs to the class-I aminoacyl-tRNA synthetase family. In terms of assembly, monomer. The cofactor is Zn(2+).

It localises to the cytoplasm. It catalyses the reaction tRNA(Cys) + L-cysteine + ATP = L-cysteinyl-tRNA(Cys) + AMP + diphosphate. The chain is Cysteine--tRNA ligase from Picosynechococcus sp. (strain ATCC 27264 / PCC 7002 / PR-6) (Agmenellum quadruplicatum).